The primary structure comprises 1906 residues: Retinoic acid-induced protein 1 (1906 aa).

Disordered stretches follow at residues 1–261 (MQSF…APGQ), 273–299 (RLSYDQQQQQQQQQQQQQQALQSRHHA), 335–370 (YQTFSPSSSHSPARSVGRSPSYSSTPSPLMPNLENF), 469–520 (VSRT…YLSG), 538–571 (SPARVNSNSKAKPESVSTCSVTSPDDMSTKSDDS), and 656–712 (SAWP…GTKP). Over residues 13–24 (KQQNYQQTSQET) the composition is skewed to polar residues. Low complexity predominate over residues 66 to 75 (PSGTAAAVAA). Pro residues predominate over residues 124 to 134 (PQPPPPQPQPL). The segment covering 213 to 226 (SQSFPTSSTYSSSV) has biased composition (low complexity). Residues 252–261 (TASSSLAPGQ) show a composition bias toward polar residues. Composition is skewed to low complexity over residues 278–291 (QQQQQQQQQQQQQQ) and 339–353 (SPSSSHSPARSVGRS). Phosphoserine occurs at positions 339 and 345. Position 472 is a phosphothreonine (Thr-472). Residues 541 to 563 (RVNSNSKAKPESVSTCSVTSPDD) show a composition bias toward polar residues. A phosphoserine mark is found at Ser-568 and Ser-683. Thr-696 is subject to Phosphothreonine. Position 805 is a phosphoserine (Ser-805). A Glycyl lysine isopeptide (Lys-Gly) (interchain with G-Cter in SUMO2) cross-link involves residue Lys-811. A Glycyl lysine isopeptide (Lys-Gly) (interchain with G-Cter in SUMO1) cross-link involves residue Lys-819. 2 positions are modified to phosphoserine: Ser-880 and Ser-892. Lys-901 participates in a covalent cross-link: Glycyl lysine isopeptide (Lys-Gly) (interchain with G-Cter in SUMO1); alternate. Lys-901 participates in a covalent cross-link: Glycyl lysine isopeptide (Lys-Gly) (interchain with G-Cter in SUMO2); alternate. Residues 937 to 947 (KVQSWFESSLS) show a composition bias toward polar residues. 5 disordered regions span residues 937 to 1299 (KVQS…ETPD), 1344 to 1570 (FACK…PLDP), 1613 to 1637 (VVNSPGDAPKPHRKPSSSASSSSSS), 1746 to 1775 (AAAATAGKPPRPDGPADPAKQGPLRTSARG), and 1794 to 1819 (EEAAPADKGRKHECSKEAPAEPGGEA). The span at 950 to 962 (KPGEEGPDGERAP) shows a compositional bias: basic and acidic residues. Positions 996-1005 (KSLRSRRVHR) are enriched in basic residues. At Ser-1064 the chain carries Phosphoserine. The residue at position 1068 (Thr-1068) is a Phosphothreonine. The span at 1101–1119 (PSPKAASSPSNPAALPVAS) shows a compositional bias: low complexity. Ser-1122 bears the Phosphoserine mark. Short sequence motifs (nuclear localization signal) lie at residues 1160-1177 (RRRPSEGRLPNCRATKKL) and 1223-1240 (KRKSAFMAPVPTKKRNLV). Residues 1242 to 1252 (RSRSSSSSNAS) show a composition bias toward low complexity. Phosphoserine occurs at positions 1352, 1358, and 1374. Lys-1425 is covalently cross-linked (Glycyl lysine isopeptide (Lys-Gly) (interchain with G-Cter in SUMO2)). Ser-1431 bears the Phosphoserine mark. The segment covering 1444–1453 (PKKRSRKGRA) has biased composition (basic residues). 2 stretches are compositionally biased toward polar residues: residues 1482–1491 (SGTQGASEDN) and 1517–1534 (QPQTRAQKQPGHTNYSSY). Residues 1535-1545 (SKRKRLTRGRA) are compositionally biased toward basic residues. A compositionally biased stretch (low complexity) spans 1628 to 1637 (SSSASSSSSS). Residues 1780-1835 (LQSCYCCDGREDGGEEAAPADKGRKHECSKEAPAEPGGEAQEHWVHEACAVWTGGV) form a C2HC pre-PHD-type zinc finger. Over residues 1798–1812 (PADKGRKHECSKEAP) the composition is skewed to basic and acidic residues. The PHD-type zinc finger occupies 1855-1903 (MMCSSCQEAGATIGCCHKGCLHTYHYPCASDAGCIFIEENFSLKCPKHK).

In terms of tissue distribution, expressed in all tissues examined with higher expression in the heart and brain. No expression was seen in the corpus callosum of the brain.

It localises to the cytoplasm. It is found in the nucleus. In terms of biological role, transcriptional regulator of the circadian clock components: CLOCK, BMAL1, BMAL2, PER1/3, CRY1/2, NR1D1/2 and RORA/C. Positively regulates the transcriptional activity of CLOCK a core component of the circadian clock. Regulates transcription through chromatin remodeling by interacting with other proteins in chromatin as well as proteins in the basic transcriptional machinery. May be important for embryonic and postnatal development. May be involved in neuronal differentiation. The polypeptide is Retinoic acid-induced protein 1 (RAI1) (Homo sapiens (Human)).